The following is an 87-amino-acid chain: Phosphoribosyl-ATP pyrophosphatase (87 aa).

It belongs to the PRA-PH family.

The protein localises to the cytoplasm. The enzyme catalyses 1-(5-phospho-beta-D-ribosyl)-ATP + H2O = 1-(5-phospho-beta-D-ribosyl)-5'-AMP + diphosphate + H(+). Its pathway is amino-acid biosynthesis; L-histidine biosynthesis; L-histidine from 5-phospho-alpha-D-ribose 1-diphosphate: step 2/9. The sequence is that of Phosphoribosyl-ATP pyrophosphatase from Nocardioides sp. (strain ATCC BAA-499 / JS614).